We begin with the raw amino-acid sequence, 124 residues long: Large ribosomal subunit protein bL12 (124 aa).

The protein belongs to the bacterial ribosomal protein bL12 family. As to quaternary structure, homodimer. Part of the ribosomal stalk of the 50S ribosomal subunit. Forms a multimeric L10(L12)X complex, where L10 forms an elongated spine to which 2 to 4 L12 dimers bind in a sequential fashion. Binds GTP-bound translation factors.

Functionally, forms part of the ribosomal stalk which helps the ribosome interact with GTP-bound translation factors. Is thus essential for accurate translation. This chain is Large ribosomal subunit protein bL12, found in Campylobacter fetus subsp. fetus (strain 82-40).